The chain runs to 146 residues: Hemoglobin subunit beta (146 aa).

Position 1 is an N-acetylvaline (valine 1). One can recognise a Globin domain in the interval 2–146 (HLTAEEKSAV…VATALAHKYH (145 aa)). A Phosphothreonine modification is found at threonine 12. Serine 44 is modified (phosphoserine). Position 59 is an N6-acetyllysine (lysine 59). Histidine 63 is a heme b binding site. Position 82 is an N6-acetyllysine (lysine 82). Heme b is bound at residue histidine 92. S-nitrosocysteine is present on cysteine 93. N6-acetyllysine is present on lysine 144.

It belongs to the globin family. Heterotetramer of two alpha chains and two beta chains. In terms of tissue distribution, red blood cells.

In terms of biological role, involved in oxygen transport from the lung to the various peripheral tissues. This is Hemoglobin subunit beta (HBB) from Cebus albifrons (White-fronted capuchin).